Here is a 361-residue protein sequence, read N- to C-terminus: Fructose-bisphosphate aldolase (361 aa).

Thr-2 carries the post-translational modification N-acetylthreonine. The substrate site is built by Arg-56 and Lys-147. Glu-188 acts as the Proton acceptor in catalysis. Residue Lys-230 is the Schiff-base intermediate with dihydroxyacetone-P of the active site.

Belongs to the class I fructose-bisphosphate aldolase family. In terms of assembly, homotetramer. In terms of tissue distribution, mainly expressed in the heads and partly in the thoraxes of adult flies. Expressed in all adult tissues. The Alpha-beta mRNA shows strong expression in the abdomens of adults. As to expression, mainly expressed in adult abdominal regions and is also expressed in lesser amounts in other parts of the body. The Beta-gamma mRNA is expressed in adult heads.

It catalyses the reaction beta-D-fructose 1,6-bisphosphate = D-glyceraldehyde 3-phosphate + dihydroxyacetone phosphate. Its pathway is carbohydrate degradation; glycolysis; D-glyceraldehyde 3-phosphate and glycerone phosphate from D-glucose: step 4/4. Functionally, enzyme of the glycolytic pathway. Glycolysis is essential in glial cells but not in neurons; neurons rely on the citric acid cycle for their energy needs, and on lactate and alanine secreted into the hemolymph by glial cells to fuel it. May take part in developmental stage-specific or tissue -specific sugar-phosphate metabolisms. Protein acts on two substrates fructose 1,6-bisphosphate and fructose 1-phosphate (like other class I aldolases). This Drosophila melanogaster (Fruit fly) protein is Fructose-bisphosphate aldolase.